Reading from the N-terminus, the 124-residue chain is Late histone H2B.2.2 (124 aa).

The segment at 1–32 (MPAKQTSGKGAKKAGKAKGRPSGASKTRRRKR) is disordered. Positions 10–19 (GAKKAGKAKG) are enriched in basic residues. O-linked (GlcNAc) serine glycosylation is present at Ser-111. Lys-119 participates in a covalent cross-link: Glycyl lysine isopeptide (Lys-Gly) (interchain with G-Cter in ubiquitin).

Belongs to the histone H2B family. As to quaternary structure, the nucleosome is a histone octamer containing two molecules each of H2A, H2B, H3 and H4 assembled in one H3-H4 heterotetramer and two H2A-H2B heterodimers. The octamer wraps approximately 147 bp of DNA. Monoubiquitination of Lys-119 gives a specific tag for epigenetic transcriptional activation and is also prerequisite for histone H3 'Lys-4' and 'Lys-79' methylation. In terms of processing, glcNAcylation at Ser-111 promotes monoubiquitination of Lys-119. It fluctuates in response to extracellular glucose, and associates with transcribed genes.

It is found in the nucleus. Its subcellular location is the chromosome. Functionally, core component of nucleosome. Nucleosomes wrap and compact DNA into chromatin, limiting DNA accessibility to the cellular machineries which require DNA as a template. Histones thereby play a central role in transcription regulation, DNA repair, DNA replication and chromosomal stability. DNA accessibility is regulated via a complex set of post-translational modifications of histones, also called histone code, and nucleosome remodeling. The sequence is that of Late histone H2B.2.2 from Psammechinus miliaris (Green sea urchin).